The sequence spans 142 residues: Universal stress protein D (142 aa).

The protein belongs to the universal stress protein A family.

Its subcellular location is the cytoplasm. Its function is as follows. Required for resistance to DNA-damaging agents. The protein is Universal stress protein D (uspD) of Escherichia coli O157:H7.